The primary structure comprises 257 residues: Imidazole glycerol phosphate synthase subunit HisF (257 aa).

Active-site residues include aspartate 11 and aspartate 130.

The protein belongs to the HisA/HisF family. As to quaternary structure, heterodimer of HisH and HisF.

The protein resides in the cytoplasm. The catalysed reaction is 5-[(5-phospho-1-deoxy-D-ribulos-1-ylimino)methylamino]-1-(5-phospho-beta-D-ribosyl)imidazole-4-carboxamide + L-glutamine = D-erythro-1-(imidazol-4-yl)glycerol 3-phosphate + 5-amino-1-(5-phospho-beta-D-ribosyl)imidazole-4-carboxamide + L-glutamate + H(+). It participates in amino-acid biosynthesis; L-histidine biosynthesis; L-histidine from 5-phospho-alpha-D-ribose 1-diphosphate: step 5/9. Functionally, IGPS catalyzes the conversion of PRFAR and glutamine to IGP, AICAR and glutamate. The HisF subunit catalyzes the cyclization activity that produces IGP and AICAR from PRFAR using the ammonia provided by the HisH subunit. The chain is Imidazole glycerol phosphate synthase subunit HisF from Shewanella woodyi (strain ATCC 51908 / MS32).